Consider the following 327-residue polypeptide: DNA-directed RNA polymerase subunit alpha (327 aa).

An alpha N-terminal domain (alpha-NTD) region spans residues 1–233; that stretch reads MVREKVKVST…NLFIPFLHVE (233 aa). Positions 267 to 327 are alpha C-terminal domain (alpha-CTD); the sequence is LAFQYIFIDQ…KKILDILEKK (61 aa).

It belongs to the RNA polymerase alpha chain family. In plastids the minimal PEP RNA polymerase catalytic core is composed of four subunits: alpha, beta, beta', and beta''. When a (nuclear-encoded) sigma factor is associated with the core the holoenzyme is formed, which can initiate transcription.

The protein localises to the plastid. It localises to the chloroplast. It catalyses the reaction RNA(n) + a ribonucleoside 5'-triphosphate = RNA(n+1) + diphosphate. Its function is as follows. DNA-dependent RNA polymerase catalyzes the transcription of DNA into RNA using the four ribonucleoside triphosphates as substrates. In Lobularia maritima (Sweet alyssum), this protein is DNA-directed RNA polymerase subunit alpha.